Consider the following 669-residue polypeptide: Methionine--tRNA ligase (669 aa).

The 'HIGH' region signature appears at 14–24; it reads YYPSGKLHIGN. H161 is a binding site for Zn(2+). The short motif at 309–313 is the 'KMSKS' region element; it reads KMSKS. K312 contributes to the ATP binding site. Positions 566-669 constitute a tRNA-binding domain; it reads DFDKVELKVA…KEMPNGAGIA (104 aa).

The protein belongs to the class-I aminoacyl-tRNA synthetase family. MetG type 2B subfamily. Homodimer.

It is found in the cytoplasm. The enzyme catalyses tRNA(Met) + L-methionine + ATP = L-methionyl-tRNA(Met) + AMP + diphosphate. Its function is as follows. Is required not only for elongation of protein synthesis but also for the initiation of all mRNA translation through initiator tRNA(fMet) aminoacylation. In Enterococcus faecalis (strain ATCC 700802 / V583), this protein is Methionine--tRNA ligase.